Consider the following 496-residue polypeptide: Angiopoietin-2 (496 aa).

The first 18 residues, 1–18 (MWQLVFFALSCDLVLAAA), serve as a signal peptide directing secretion. 6 N-linked (GlcNAc...) asparagine glycosylation sites follow: Asn-89, Asn-119, Asn-133, Asn-151, Asn-240, and Asn-304. The stretch at 130–255 (NLLNQTAEQT…KQQHDLMETV (126 aa)) forms a coiled coil. The Fibrinogen C-terminal domain maps to 275–495 (KEEQIIFRDC…ATTMMIRPAD (221 aa)). A disulfide bridge links Cys-284 with Cys-313. Ca(2+) contacts are provided by Asp-429, Asp-431, Cys-433, and Cys-435. Intrachain disulfides connect Cys-433/Cys-435 and Cys-437/Cys-450.

As to quaternary structure, interacts with TEK/TIE2, competing for the same binding site as ANGPT1. Interacts with ITGA5. Interacts with SVEP1/polydom. Interacts with THBD; this interaction significantly inhibits the generation of activated PC and TAFIa/CPB2 by the thrombin/thrombomodulin complex.

It localises to the secreted. Its function is as follows. Binds to TEK/TIE2, competing for the ANGPT1 binding site, and modulating ANGPT1 signaling. Can induce tyrosine phosphorylation of TEK/TIE2 in the absence of ANGPT1. In the absence of angiogenic inducers, such as VEGF, ANGPT2-mediated loosening of cell-matrix contacts may induce endothelial cell apoptosis with consequent vascular regression. In concert with VEGF, it may facilitate endothelial cell migration and proliferation, thus serving as a permissive angiogenic signal. Involved in the regulation of lymphangiogenesis. This is Angiopoietin-2 (ANGPT2) from Sus scrofa (Pig).